The chain runs to 460 residues: Bifunctional protein GlmU (460 aa).

The segment at 1–229 (MTNYAIILAA…FNESLGVNDR (229 aa)) is pyrophosphorylase. UDP-N-acetyl-alpha-D-glucosamine-binding positions include 8–11 (LAAG), Lys-22, Gln-72, and 77–78 (GT). Asp-102 is a Mg(2+) binding site. UDP-N-acetyl-alpha-D-glucosamine-binding residues include Gly-139, Glu-154, Asn-169, and Asn-227. Asn-227 is a Mg(2+) binding site. Residues 230–250 (VALAIAETVMRQRITQKHMVN) are linker. The tract at residues 251-460 (GVTFQNPETV…RLAHHPSRSK (210 aa)) is N-acetyltransferase. UDP-N-acetyl-alpha-D-glucosamine-binding residues include Arg-332 and Lys-350. His-362 (proton acceptor) is an active-site residue. UDP-N-acetyl-alpha-D-glucosamine contacts are provided by Tyr-365 and Asn-376. Acetyl-CoA is bound by residues Ala-379, 385 to 386 (NY), Ser-404, Ala-422, and Arg-439.

This sequence in the N-terminal section; belongs to the N-acetylglucosamine-1-phosphate uridyltransferase family. In the C-terminal section; belongs to the transferase hexapeptide repeat family. Homotrimer. Mg(2+) serves as cofactor.

It is found in the cytoplasm. The enzyme catalyses alpha-D-glucosamine 1-phosphate + acetyl-CoA = N-acetyl-alpha-D-glucosamine 1-phosphate + CoA + H(+). It carries out the reaction N-acetyl-alpha-D-glucosamine 1-phosphate + UTP + H(+) = UDP-N-acetyl-alpha-D-glucosamine + diphosphate. It functions in the pathway nucleotide-sugar biosynthesis; UDP-N-acetyl-alpha-D-glucosamine biosynthesis; N-acetyl-alpha-D-glucosamine 1-phosphate from alpha-D-glucosamine 6-phosphate (route II): step 2/2. It participates in nucleotide-sugar biosynthesis; UDP-N-acetyl-alpha-D-glucosamine biosynthesis; UDP-N-acetyl-alpha-D-glucosamine from N-acetyl-alpha-D-glucosamine 1-phosphate: step 1/1. Its pathway is bacterial outer membrane biogenesis; LPS lipid A biosynthesis. Its function is as follows. Catalyzes the last two sequential reactions in the de novo biosynthetic pathway for UDP-N-acetylglucosamine (UDP-GlcNAc). The C-terminal domain catalyzes the transfer of acetyl group from acetyl coenzyme A to glucosamine-1-phosphate (GlcN-1-P) to produce N-acetylglucosamine-1-phosphate (GlcNAc-1-P), which is converted into UDP-GlcNAc by the transfer of uridine 5-monophosphate (from uridine 5-triphosphate), a reaction catalyzed by the N-terminal domain. The sequence is that of Bifunctional protein GlmU from Streptococcus pyogenes serotype M1.